Consider the following 349-residue polypeptide: N-acetyl-gamma-glutamyl-phosphate reductase (349 aa).

The active site involves Cys149.

This sequence belongs to the NAGSA dehydrogenase family. Type 1 subfamily.

It is found in the cytoplasm. It carries out the reaction N-acetyl-L-glutamate 5-semialdehyde + phosphate + NADP(+) = N-acetyl-L-glutamyl 5-phosphate + NADPH + H(+). The protein operates within amino-acid biosynthesis; L-arginine biosynthesis; N(2)-acetyl-L-ornithine from L-glutamate: step 3/4. Catalyzes the NADPH-dependent reduction of N-acetyl-5-glutamyl phosphate to yield N-acetyl-L-glutamate 5-semialdehyde. The polypeptide is N-acetyl-gamma-glutamyl-phosphate reductase (Acinetobacter baumannii (strain ACICU)).